A 611-amino-acid chain; its full sequence is MSITKLARSNAFKPIPNFVRSSLRNAGVESSQNTEYPPYKPKKHHILATNLIVSYFEKGLVEEARSLFDEMPDRDVVAWTAMITGYASSNYNARAWECFHEMVKQGTSPNEFTLSSVLKSCRNMKVLAYGALVHGVVVKLGMEGSLYVDNAMMNMYATCSVTMEAACLIFRDIKVKNDVTWTTLITGFTHLGDGIGGLKMYKQMLLENAEVTPYCITIAVRASASIDSVTTGKQIHASVIKRGFQSNLPVMNSILDLYCRCGYLSEAKHYFHEMEDKDLITWNTLISELERSDSSEALLMFQRFESQGFVPNCYTFTSLVAACANIAALNCGQQLHGRIFRRGFNKNVELANALIDMYAKCGNIPDSQRVFGEIVDRRNLVSWTSMMIGYGSHGYGAEAVELFDKMVSSGIRPDRIVFMAVLSACRHAGLVEKGLKYFNVMESEYGINPDRDIYNCVVDLLGRAGKIGEAYELVERMPFKPDESTWGAILGACKAHKHNGLISRLAARKVMELKPKMVGTYVMLSYIYAAEGKWVDFARVRKMMRMMGNKKEAGMSWILVENQVFSFAVSDKMCPNASSVYSVLGLLIEETREAGYVPELDSLVNDQEVGT.

PPR repeat units follow at residues 44 to 74, 75 to 109, 110 to 144, 145 to 176, 177 to 211, 212 to 246, 247 to 281, 282 to 311, 312 to 346, 347 to 377, 379 to 413, 414 to 444, and 450 to 480; these read HHIL…MPDR, DVVA…GTSP, NEFT…GMEG, SLYV…IKVK, NDVT…NAEV, TPYC…GFQS, NLPV…DLIT, WNTL…GFVP, NCYT…GFNK, NVEL…IVDR, NLVS…GIRP, DRIV…MESE, and DRDI…MPFK. Residues 485–561 form a type E motif region; that stretch reads TWGAILGACK…EAGMSWILVE (77 aa). Residues 562–592 are type E(+) motif; sequence NQVFSFAVSDKMCPNASSVYSVLGLLIEETR.

This sequence belongs to the PPR family. PCMP-E subfamily.

This is Putative pentatricopeptide repeat-containing protein At1g56570 (PCMP-E64) from Arabidopsis thaliana (Mouse-ear cress).